Reading from the N-terminus, the 92-residue chain is UPF0298 protein BH2594 (92 aa).

It belongs to the UPF0298 family.

The protein resides in the cytoplasm. The chain is UPF0298 protein BH2594 from Halalkalibacterium halodurans (strain ATCC BAA-125 / DSM 18197 / FERM 7344 / JCM 9153 / C-125) (Bacillus halodurans).